Consider the following 83-residue polypeptide: uncharacterized protein (83 aa).

The chain crosses the membrane as a helical span at residues 50-70 (IMVFLGEAWIILIPFAIFCII).

Belongs to the plectrovirus ORF7 family.

It localises to the host membrane. This is an uncharacterized protein from Spiroplasma melliferum (SpV1).